The primary structure comprises 486 residues: Malonate-semialdehyde dehydrogenase (486 aa).

Residues Phe154, Lys178, Glu181, Arg182, and Ser231 each contribute to the NAD(+) site. Cys286 serves as the catalytic Nucleophile. Glu386 serves as a coordination point for NAD(+).

Belongs to the aldehyde dehydrogenase family. IolA subfamily. In terms of assembly, homotetramer.

The enzyme catalyses 3-oxopropanoate + NAD(+) + CoA + H2O = hydrogencarbonate + acetyl-CoA + NADH + H(+). The catalysed reaction is 2-methyl-3-oxopropanoate + NAD(+) + CoA + H2O = propanoyl-CoA + hydrogencarbonate + NADH + H(+). Its pathway is polyol metabolism; myo-inositol degradation into acetyl-CoA; acetyl-CoA from myo-inositol: step 7/7. Catalyzes the oxidation of malonate semialdehyde (MSA) and methylmalonate semialdehyde (MMSA) into acetyl-CoA and propanoyl-CoA, respectively. Is involved in a myo-inositol catabolic pathway. Bicarbonate, and not CO2, is the end-product of the enzymatic reaction. This is Malonate-semialdehyde dehydrogenase from Bacillus pumilus (strain SAFR-032).